Reading from the N-terminus, the 349-residue chain is Protein RecA (349 aa).

An ATP-binding site is contributed by 65–72 (GPESSGKT).

This sequence belongs to the RecA family.

Its subcellular location is the cytoplasm. Functionally, can catalyze the hydrolysis of ATP in the presence of single-stranded DNA, the ATP-dependent uptake of single-stranded DNA by duplex DNA, and the ATP-dependent hybridization of homologous single-stranded DNAs. It interacts with LexA causing its activation and leading to its autocatalytic cleavage. The protein is Protein RecA of Acinetobacter baumannii (strain AB307-0294).